Here is a 381-residue protein sequence, read N- to C-terminus: Cyclin-dependent kinase inhibitor CIP1 (381 aa).

Over residues 1 to 11 the composition is skewed to basic residues; that stretch reads MLLERLHKRLH. Residues 1–30 form a disordered region; that stretch reads MLLERLHKRLHAGSSRRSQENKDKNCKPED. A compositionally biased stretch (basic and acidic residues) spans 17 to 30; it reads RSQENKDKNCKPED. Phosphothreonine is present on residues Thr65, Thr69, and Thr73.

In terms of assembly, interact with the CDC28/CLN2 complex. Post-translationally, phosphorylated during S phase in a CDC28-dependent manner. Phosphorylated at Thr-65 and Thr-73 by HOG1 under osmotic stress. The phosphorylations of Thr-65 and Thr-73 are necessary for CIP1-induced growth inhibition.

The protein resides in the cytoplasm. It localises to the nucleus. Its function is as follows. Acts as an inhibitor of the CDC28/CLN2 cyclin-dependent kinase complex. Stabilizes the CDC28 inhibitor SIC1. Negatively regulates the G1/S phase transition. Contributes to osmostress-induced transitory G1 delay. The protein is Cyclin-dependent kinase inhibitor CIP1 of Saccharomyces cerevisiae (strain ATCC 204508 / S288c) (Baker's yeast).